A 377-amino-acid chain; its full sequence is MTHRYDVAIVGGGVIGAAIGFELAKRRHRVAIFEKGTMGSGASSAAAGMLGAQSEFSTSSPLVPLALQSRALMPALAEELRERTGIDIGLVEKGLIKLATTEEEADDLYRHYTFWRGIGEPVQWLTKGEALEMEPRLAAEALAGAMYIPGDGQVSAPDLAAALAYAAASAGACLYEYTEVFDIRSDSSGHVLDTTGGTFAAEAVVIASGAWAARLGARVGLSLSVYPVKGECVMVRAPVPLLQTTVFAKNGCYIVPKSGNRLLIGATSTPGTFDRRVSAGGVMNLLHRAAHLVPDIEQAEWVASWSGIRPQTEDGLPYLGEHPERRGLFVAAGHYRNGILLSPLTGLLVADLVERKETAFDLAPFSLTRHIGKVGVE.

FAD-binding positions include 14–15, 34–35, 42–43, 47–49, and Val180; these read VI, EK, AS, and AGM. The substrate site is built by Arg309 and Arg336. An FAD-binding site is contributed by 334-340; sequence HYRNGIL.

The protein belongs to the DAO family. ThiO subfamily. Homotetramer. Requires FAD as cofactor.

The enzyme catalyses glycine + O2 + H2O = glyoxylate + H2O2 + NH4(+). It carries out the reaction N-ethylglycine + O2 + H2O = ethylamine + glyoxylate + H2O2. It catalyses the reaction sarcosine + O2 + H2O = methylamine + glyoxylate + H2O2. The catalysed reaction is D-alanine + O2 + H2O = pyruvate + H2O2 + NH4(+). Its pathway is cofactor biosynthesis; thiamine diphosphate biosynthesis. With respect to regulation, is inhibited at high substrate concentration. In terms of biological role, catalyzes the FAD-dependent oxidative deamination of various amines and D-amino acids to yield the corresponding alpha-keto acids, ammonia/amine, and hydrogen peroxide. Oxidizes glycine, sarcosine (N-methylglycine), N-ethylglycine, D-proline, D-alanine, glycine-ethyl ester, and some other D-amino acids. Does not act on L-proline. Is essential for thiamine biosynthesis since the oxidation of glycine catalyzed by ThiO generates the glycine imine intermediate (dehydroglycine) required for the biosynthesis of the thiazole ring of thiamine pyrophosphate. The protein is Glycine oxidase of Geobacillus kaustophilus (strain HTA426).